Consider the following 385-residue polypeptide: UDP-N-acetylglucosamine--N-acetylmuramyl-(pentapeptide) pyrophosphoryl-undecaprenol N-acetylglucosamine transferase (385 aa).

UDP-N-acetyl-alpha-D-glucosamine-binding positions include 11–13 (TGG), Asn117, Arg160, Ser215, and Gln317.

The protein belongs to the glycosyltransferase 28 family. MurG subfamily.

The protein localises to the cell inner membrane. The enzyme catalyses di-trans,octa-cis-undecaprenyl diphospho-N-acetyl-alpha-D-muramoyl-L-alanyl-D-glutamyl-meso-2,6-diaminopimeloyl-D-alanyl-D-alanine + UDP-N-acetyl-alpha-D-glucosamine = di-trans,octa-cis-undecaprenyl diphospho-[N-acetyl-alpha-D-glucosaminyl-(1-&gt;4)]-N-acetyl-alpha-D-muramoyl-L-alanyl-D-glutamyl-meso-2,6-diaminopimeloyl-D-alanyl-D-alanine + UDP + H(+). Its pathway is cell wall biogenesis; peptidoglycan biosynthesis. Its function is as follows. Cell wall formation. Catalyzes the transfer of a GlcNAc subunit on undecaprenyl-pyrophosphoryl-MurNAc-pentapeptide (lipid intermediate I) to form undecaprenyl-pyrophosphoryl-MurNAc-(pentapeptide)GlcNAc (lipid intermediate II). The polypeptide is UDP-N-acetylglucosamine--N-acetylmuramyl-(pentapeptide) pyrophosphoryl-undecaprenol N-acetylglucosamine transferase (Rickettsia prowazekii (strain Madrid E)).